A 661-amino-acid polypeptide reads, in one-letter code: UvrABC system protein B (661 aa).

The 387-residue stretch at 28–414 (DGVNEGKRHQ…HTDEMVEQII (387 aa)) folds into the Helicase ATP-binding domain. 41–48 (GATGTGKT) contacts ATP. A Beta-hairpin motif is present at residues 94–117 (YYDYYQPEAYVPSTDTFIEKDASI). Positions 432–598 (QIDDLLSEIQ…TINKKIHDVI (167 aa)) constitute a Helicase C-terminal domain. The tract at residues 603–624 (ESDETNQQQQTELPKKMTKKER) is disordered. The region spanning 625–660 (QKTIENIEKEMKKAAKDLDFEKATELRDMLFELKAE) is the UVR domain.

It belongs to the UvrB family. Forms a heterotetramer with UvrA during the search for lesions. Interacts with UvrC in an incision complex.

Its subcellular location is the cytoplasm. Functionally, the UvrABC repair system catalyzes the recognition and processing of DNA lesions. A damage recognition complex composed of 2 UvrA and 2 UvrB subunits scans DNA for abnormalities. Upon binding of the UvrA(2)B(2) complex to a putative damaged site, the DNA wraps around one UvrB monomer. DNA wrap is dependent on ATP binding by UvrB and probably causes local melting of the DNA helix, facilitating insertion of UvrB beta-hairpin between the DNA strands. Then UvrB probes one DNA strand for the presence of a lesion. If a lesion is found the UvrA subunits dissociate and the UvrB-DNA preincision complex is formed. This complex is subsequently bound by UvrC and the second UvrB is released. If no lesion is found, the DNA wraps around the other UvrB subunit that will check the other stand for damage. This Staphylococcus epidermidis (strain ATCC 35984 / DSM 28319 / BCRC 17069 / CCUG 31568 / BM 3577 / RP62A) protein is UvrABC system protein B.